Here is a 387-residue protein sequence, read N- to C-terminus: V-set and immunoglobulin domain-containing protein 1 (387 aa).

The first 21 residues, 1–21 (MVFAFWKVFLILSCLAGQVSV), serve as a signal peptide directing secretion. The Ig-like V-type domain maps to 22-132 (VQVTIPDGFV…DFLGQNQGIL (111 aa)). Topologically, residues 22-232 (VQVTIPDGFV…EIDLTSSHPE (211 aa)) are extracellular. N-linked (GlcNAc...) asparagine glycans are attached at residues asparagine 32 and asparagine 38. Cysteine 43 and cysteine 116 are disulfide-bonded. Residues asparagine 133, asparagine 200, and asparagine 219 are each glycosylated (N-linked (GlcNAc...) asparagine). The region spanning 140-227 (PSKPLCSVQG…GNSSCEIDLT (88 aa)) is the Ig-like C2-type domain. A disulfide bridge connects residues cysteine 161 and cysteine 211. The chain crosses the membrane as a helical span at residues 233–253 (VGIIVGALIGSLVGAAIIISV). The Cytoplasmic portion of the chain corresponds to 254–387 (VCFARNKAKA…SEDEKGVVKA (134 aa)). Residues 266 to 387 (KERNSKTIAE…SEDEKGVVKA (122 aa)) form a disordered region. Residues 284–296 (PRGESEAMPREDA) show a composition bias toward basic and acidic residues. The segment covering 299-308 (LEVTLPSSIH) has biased composition (polar residues). Over residues 325 to 335 (TQEPAPEPAPG) the composition is skewed to pro residues. Residues 344-368 (LDIELELEPETQSELEPEPEPEPES) are compositionally biased toward acidic residues.

In terms of processing, highly N-glycosylated. Appears not to contain significant amounts of O-linked carbohydrates or sialic acid in its sugar moieties. Detected only in stomach mucosa and testis, and to a much lesser level in pancreas (at protein level). Detected in gastric cancers (31%), esophageal carcinomas (50%) and ovarian cancers (23%).

Its subcellular location is the membrane. This Homo sapiens (Human) protein is V-set and immunoglobulin domain-containing protein 1 (VSIG1).